Reading from the N-terminus, the 425-residue chain is COBRA-like protein 4 (425 aa).

Positions 1–27 (MAIGVGGCCAVLLAAALLFSSPATTYA) are cleaved as a signal peptide. Residues asparagine 36, asparagine 163, asparagine 171, asparagine 319, and asparagine 352 are each glycosylated (N-linked (GlcNAc...) asparagine).

The protein belongs to the COBRA family.

The chain is COBRA-like protein 4 (BC1L9) from Oryza sativa subsp. japonica (Rice).